Here is a 187-residue protein sequence, read N- to C-terminus: Large ribosomal subunit protein uL5 (187 aa).

Belongs to the universal ribosomal protein uL5 family. As to quaternary structure, part of the 50S ribosomal subunit; part of the 5S rRNA/L5/L18/L25 subcomplex. Contacts the 5S rRNA and the P site tRNA. Forms a bridge to the 30S subunit in the 70S ribosome.

Functionally, this is one of the proteins that bind and probably mediate the attachment of the 5S RNA into the large ribosomal subunit, where it forms part of the central protuberance. In the 70S ribosome it contacts protein S13 of the 30S subunit (bridge B1b), connecting the 2 subunits; this bridge is implicated in subunit movement. Contacts the P site tRNA; the 5S rRNA and some of its associated proteins might help stabilize positioning of ribosome-bound tRNAs. The protein is Large ribosomal subunit protein uL5 of Brachyspira hyodysenteriae (strain ATCC 49526 / WA1).